The following is a 158-amino-acid chain: Large ribosomal subunit protein mL50 (158 aa).

It belongs to the mitochondrion-specific ribosomal protein mL50 family. As to quaternary structure, component of the mitochondrial ribosome large subunit (39S) which comprises a 16S rRNA and about 50 distinct proteins.

Its subcellular location is the mitochondrion. The polypeptide is Large ribosomal subunit protein mL50 (MRPL50) (Pongo abelii (Sumatran orangutan)).